The chain runs to 291 residues: Foldase protein PrsA 2 (291 aa).

Positions 1–20 (MKKKLILGLVMMMALFSLAA) are cleaved as a signal peptide. The N-palmitoyl cysteine moiety is linked to residue cysteine 21. Cysteine 21 is lipidated: S-diacylglycerol cysteine. One can recognise a PpiC domain in the interval 135–226 (QPDITVSHIL…YGYHIIQMDK (92 aa)).

The protein belongs to the PrsA family.

The protein localises to the cell membrane. It catalyses the reaction [protein]-peptidylproline (omega=180) = [protein]-peptidylproline (omega=0). In terms of biological role, plays a major role in protein secretion by helping the post-translocational extracellular folding of several secreted proteins. In Listeria innocua serovar 6a (strain ATCC BAA-680 / CLIP 11262), this protein is Foldase protein PrsA 2 (prsA2).